A 536-amino-acid chain; its full sequence is Enterobactin synthase component E (536 aa).

Asparagine 235, serine 240, glycine 309, valine 331, alanine 335, aspartate 415, and lysine 432 together coordinate substrate. Positions 438 to 439 (GG) are phosphopantetheine binding. Lysine 441 is a substrate binding site.

Belongs to the ATP-dependent AMP-binding enzyme family. EntE subfamily. As to quaternary structure, proteins EntB, EntD, EntE, and EntF form a multienzyme complex called enterobactin synthase. Monomer. EntA and EntE interact together.

The protein resides in the membrane. The enzyme catalyses 3 2,3-dihydroxybenzoate + 3 L-serine + 6 ATP = enterobactin + 6 AMP + 6 diphosphate + 4 H(+). The catalysed reaction is 2,3-dihydroxybenzoate + holo-[ACP] + ATP = 2,3-dihydroxybenzoyl-[ACP] + AMP + diphosphate. It carries out the reaction 2,3-dihydroxybenzoyl-5'-AMP + holo-[ACP] = 2,3-dihydroxybenzoyl-[ACP] + AMP + H(+). The protein operates within siderophore biosynthesis; enterobactin biosynthesis. With respect to regulation, inhibited by the adenylate analogs, 5'-O-[N-(salicyl)sulfamoyl]adenosine (Sal-AMS) and 5'-O-[N-(2,3-dihydroxybenzoyl)sulfamoyl]adenosine (DHB-AMS). Adenylation of 2,3-dihydroxybenzoate (DHB) is enhanced by a protein-protein interaction between the EntA and EntE. Involved in the biosynthesis of the siderophore enterobactin (enterochelin), which is a macrocyclic trimeric lactone of N-(2,3-dihydroxybenzoyl)-serine. The serine trilactone serves as a scaffolding for the three catechol functionalities that provide hexadentate coordination for the tightly ligated iron(2+) atoms. EntE processes via a two-step adenylation-ligation reaction (bi-uni-uni-bi ping-pong mechanism). First, it catalyzes the activation of the carboxylate group of 2,3-dihydroxy-benzoate (DHB), via a reversible ATP-dependent pyrophosphate exchange reactions to yield the acyladenylate intermediate 2,3-dihydroxybenzoyl-AMP. It can also transfer AMP to salicylate, 2,4-dihydroxybenzoate, gentisate and 2,3,4-trihydroxybenzoate. In the second step, DHB is transferred from 2,3-dihydroxybenzoyl-AMP onto the phosphopantetheinylated EntB (holo-EntB) to form DHB-holo-EntB. Then this product will serve in the formation of the amide bond between 2,3-dihydroxybenzoate (DHB) and L-serine. It can also transfer adenylated salicylate to holo-EntB. This chain is Enterobactin synthase component E, found in Escherichia coli (strain K12).